The primary structure comprises 74 residues: Protein WFDC9 (74 aa).

The N-terminal stretch at 1–19 (MKFWILLLTVSAHGIVVFL) is a signal peptide.

Its subcellular location is the secreted. This is Protein WFDC9 (Wfdc9) from Rattus norvegicus (Rat).